Consider the following 632-residue polypeptide: Actin-related protein 8 (632 aa).

The segment covering 1 to 30 has biased composition (basic and acidic residues); the sequence is MTQAEREQENGKEKEKEREKEKEKEKEQRG. The tract at residues 1–43 is disordered; sequence MTQAEREQENGKEKEKEREKEKEKEKEQRGIKRPIAPPVIPEP. 288 to 291 serves as a coordination point for ATP; that stretch reads DVGD. Disordered stretches follow at residues 410–429 and 434–494; these read MTSLQHRSQGDPEDPHDEHY and QSKQ…GGAE. Residues 434-443 show a composition bias toward low complexity; it reads QSKQDQSSKA.

The protein belongs to the actin family. ARP8 subfamily. As to quaternary structure, component of the chromatin remodeling INO80 complex; specifically part of a complex module associated with the DBINO domain of INO80. Exists as monomers and dimers, but the dimer is most probably the biologically relevant form required for stable interactions with histones that exploits the twofold symmetry of the nucleosome core.

It localises to the nucleus. The protein localises to the chromosome. Its function is as follows. Plays an important role in the functional organization of mitotic chromosomes. Exhibits low basal ATPase activity, and unable to polymerize. Functionally, proposed core component of the chromatin remodeling INO80 complex which is involved in transcriptional regulation, DNA replication and probably DNA repair. Required for the recruitment of INO80 (and probably the INO80 complex) to sites of DNA damage Strongly prefer nucleosomes and H3-H4 tetramers over H2A-H2B dimers, suggesting it may act as a nucleosome recognition module within the complex. The polypeptide is Actin-related protein 8 (actr8) (Salmo salar (Atlantic salmon)).